The primary structure comprises 436 residues: Eukaryotic translation initiation factor 5 (436 aa).

Residue 27–34 coordinates GTP; the sequence is GKGNGIKT. The disordered stretch occupies residues 177-203; the sequence is NSDKGSSNDDDDDDWEPEPVEPNGMLS. The segment covering 184 to 195 has biased composition (acidic residues); the sequence is NDDDDDDWEPEP. One can recognise a W2 domain in the interval 216 to 379; sequence EKSEEQRLDM…KEAEEETEEE (164 aa). Residues 396–408 are compositionally biased toward basic and acidic residues; the sequence is LRQQKEKAAREAQ. Residues 396–436 are disordered; the sequence is LRQQKEKAAREAQQKSAKATNGNAAAASGANDEEDLDIDDI. A compositionally biased stretch (low complexity) spans 409 to 425; the sequence is QKSAKATNGNAAAASGA. A compositionally biased stretch (acidic residues) spans 426 to 436; sequence NDEEDLDIDDI.

Belongs to the eIF-2-beta/eIF-5 family.

Its function is as follows. Catalyzes the hydrolysis of GTP bound to the 40S ribosomal initiation complex (40S.mRNA.Met-tRNA[F].eIF-2.GTP) with the subsequent joining of a 60S ribosomal subunit resulting in the release of eIF-2 and the guanine nucleotide. The subsequent joining of a 60S ribosomal subunit results in the formation of a functional 80S initiation complex (80S.mRNA.Met-tRNA[F]). This chain is Eukaryotic translation initiation factor 5, found in Caenorhabditis elegans.